A 142-amino-acid chain; its full sequence is Large ribosomal subunit protein uL13 (142 aa).

This sequence belongs to the universal ribosomal protein uL13 family. As to quaternary structure, part of the 50S ribosomal subunit.

This protein is one of the early assembly proteins of the 50S ribosomal subunit, although it is not seen to bind rRNA by itself. It is important during the early stages of 50S assembly. The protein is Large ribosomal subunit protein uL13 of Cupriavidus metallidurans (strain ATCC 43123 / DSM 2839 / NBRC 102507 / CH34) (Ralstonia metallidurans).